The chain runs to 456 residues: Glycerol-3-phosphate dehydrogenase [NAD(+)] At3g07690, cytosolic (456 aa).

NAD(+) contacts are provided by residues 41 to 46 (GAGAWG), lysine 189, and alanine 228. Lysine 189 contacts substrate. Lysine 278 acts as the Proton acceptor in catalysis. NAD(+) contacts are provided by arginine 340 and glutamine 368. Residue 340–341 (RN) participates in substrate binding.

Belongs to the NAD-dependent glycerol-3-phosphate dehydrogenase family. As to quaternary structure, homodimer.

It is found in the cytoplasm. The catalysed reaction is sn-glycerol 3-phosphate + NAD(+) = dihydroxyacetone phosphate + NADH + H(+). In terms of biological role, required for glycerol-3-phosphate (G3P) accumulation during systemic acquired resistance (SAR) establishment. The chain is Glycerol-3-phosphate dehydrogenase [NAD(+)] At3g07690, cytosolic from Arabidopsis thaliana (Mouse-ear cress).